The chain runs to 393 residues: Protein TsgA (393 aa).

Over 1–10 (MTNSNRIKLT) the chain is Cytoplasmic. Residues 11 to 31 (WISFLSYALTGALVIVTGMVM) traverse the membrane as a helical segment. Over 32–50 (GNIADYFHLPVSSMSNTFT) the chain is Periplasmic. A helical membrane pass occupies residues 51–71 (FLNAGILISIFLNAWLMEIVP). Residues 72–77 (LKTQLR) lie on the Cytoplasmic side of the membrane. Residues 78–98 (FGFILMVLAVAGLMFSHSLAL) form a helical membrane-spanning segment. Residues 99–100 (FS) lie on the Periplasmic side of the membrane. The helical transmembrane segment at 101–121 (AAMFVLGLVSGITMSIGTFLI) threads the bilayer. Over 122-133 (TQLYEGRQRGSR) the chain is Cytoplasmic. Residues 134–154 (LLFTDSFFSMAGMIFPMVAAF) form a helical membrane-spanning segment. Residues 155 to 161 (LLARSIE) are Periplasmic-facing. A helical transmembrane segment spans residues 162–182 (WYWVYACIGLVYLAIFILTFG). Residues 183-205 (CEFPALGKHAQHSQAPVVKEKWG) are Cytoplasmic-facing. A helical membrane pass occupies residues 206-226 (IGVLFLAVAALCYILGQLGFI). The Periplasmic portion of the chain corresponds to 227 to 244 (SWVPEYAKGLGMSLNDAG). A helical transmembrane segment spans residues 245–265 (ALVSDFWMSYMFGMWAFSFIL). Over 266–272 (RFFDLQR) the chain is Cytoplasmic. The helical transmembrane segment at 273–293 (ILTVLAGMAAVLMYLFITGTQ) threads the bilayer. The Periplasmic segment spans residues 294-297 (AHMP). Residues 298–318 (WFILTLGFFSSAIYTSIITLG) form a helical membrane-spanning segment. The Cytoplasmic segment spans residues 319-331 (SQQTKVASPKLVN). Residues 332 to 352 (FILTCGTIGTMLTFVVTGPIV) traverse the membrane as a helical segment. At 353–360 (AHSGPQAA) the chain is on the periplasmic side. The chain crosses the membrane as a helical span at residues 361 to 381 (LLTANGLYAVVFVMCFALGFV). Over 382 to 393 (SRHRQHSSPAAH) the chain is Cytoplasmic.

Belongs to the major facilitator superfamily. TsgA family.

The protein resides in the cell inner membrane. The sequence is that of Protein TsgA from Salmonella paratyphi A (strain ATCC 9150 / SARB42).